The sequence spans 599 residues: MAYVPLSGTNVRILADVPFSNDYKNTRWFTSSSNQYNWFNSKTRVYEMSKVTFQGFRENKSYISVSLRLDLLYNASYIMFQNADYGNKWFYAFVTELEYKNVGTTYVHFEIDVLQTWMFNIKFQESFIVREHVKLWNDDGTPTINTIDEGLNYGSEYDIVSVENHRPYDDMMFLVVISKSIMHGTAGEAESRLNDINASLNGMPQPLCYYIHPFYKDGKVPKTFIGDNNANLSPIVNMLTNIFSQKSAVNNIVNMYVTDYIGLKLDYKNGDKELKLDKDMFEQAGIADDKHGNVDTIFVKKIPDYETLEIDTGDKWGGFTKDQESKLMMYPYCVTEVTDFKGNHMNLKTEYIDNNKLKIQVRGSLGVSNKVAYSIQDYNAGGSLSGGDRLTASLDTSLINNNPNDIAIINDYLSAYLQGNKNSLENQKSSILFNGIVGMLGGGVSAGASAVGRSPFGLASSVTGMTSTAGNAVLDMQALQAKQADIANIPPQLTKMGGNTAFDYGNGYRGVYVIKKQLKAEYRRSLSSFFHKYGYKINRVKKPNLRTRKAYNYIQTKDCFISGDINNNDLQEIRTIFDNGITLWHTDDIGNYSVENELR.

The protein belongs to the picovirinae distal tube protein family. As to quaternary structure, homohexamer; forms a hexameric tube structure with six flexible hydrophobic loops.

Its subcellular location is the virion. Distal (knob) tail protein that plugs the end of the tube before DNA ejection and forms a channel perforating the host membrane during ejection. The chain is Tail knob protein gp9 (9) from Bacillus phage PZA (Bacteriophage PZA).